A 258-amino-acid polypeptide reads, in one-letter code: Transcription cofactor vestigial-like protein 1 (258 aa).

2 stretches are compositionally biased toward polar residues: residues 55–65 (PQELTPSSQSE) and 74–87 (SMSP…SPWT). A disordered region spans residues 55 to 93 (PQELTPSSQSEGVMLKNDDSMSPNQWRYSSPWTKPQPEV).

It belongs to the vestigial family. As to quaternary structure, interacts with TEFs.

The protein localises to the nucleus. Its function is as follows. May act as a specific coactivator for the mammalian TEFs. This chain is Transcription cofactor vestigial-like protein 1 (VGLL1), found in Homo sapiens (Human).